We begin with the raw amino-acid sequence, 539 residues long: Peptide chain release factor 3 (539 aa).

The 270-residue stretch at 14 to 283 (EKRRNFAIIS…AFLEYALQPE (270 aa)) folds into the tr-type G domain. GTP is bound by residues 23-30 (SHPDAGKT), 91-95 (DTPGH), and 145-148 (NKLD).

The protein belongs to the TRAFAC class translation factor GTPase superfamily. Classic translation factor GTPase family. PrfC subfamily.

Its subcellular location is the cytoplasm. Its function is as follows. Increases the formation of ribosomal termination complexes and stimulates activities of RF-1 and RF-2. It binds guanine nucleotides and has strong preference for UGA stop codons. It may interact directly with the ribosome. The stimulation of RF-1 and RF-2 is significantly reduced by GTP and GDP, but not by GMP. The polypeptide is Peptide chain release factor 3 (Rippkaea orientalis (strain PCC 8801 / RF-1) (Cyanothece sp. (strain PCC 8801))).